A 244-amino-acid polypeptide reads, in one-letter code: Small ribosomal subunit protein uS2m (244 aa).

It belongs to the universal ribosomal protein uS2 family.

The protein localises to the mitochondrion. The sequence is that of Small ribosomal subunit protein uS2m (mrps2) from Dictyostelium discoideum (Social amoeba).